The following is a 621-amino-acid chain: 1-deoxy-D-xylulose-5-phosphate synthase (621 aa).

Thiamine diphosphate contacts are provided by residues histidine 80 and 121–123 (GHS). Residue aspartate 152 coordinates Mg(2+). Thiamine diphosphate is bound by residues 153–154 (GA), asparagine 181, tyrosine 288, and glutamate 370. Asparagine 181 is a binding site for Mg(2+).

This sequence belongs to the transketolase family. DXPS subfamily. Homodimer. Mg(2+) serves as cofactor. The cofactor is thiamine diphosphate.

It catalyses the reaction D-glyceraldehyde 3-phosphate + pyruvate + H(+) = 1-deoxy-D-xylulose 5-phosphate + CO2. It functions in the pathway metabolic intermediate biosynthesis; 1-deoxy-D-xylulose 5-phosphate biosynthesis; 1-deoxy-D-xylulose 5-phosphate from D-glyceraldehyde 3-phosphate and pyruvate: step 1/1. Catalyzes the acyloin condensation reaction between C atoms 2 and 3 of pyruvate and glyceraldehyde 3-phosphate to yield 1-deoxy-D-xylulose-5-phosphate (DXP). The protein is 1-deoxy-D-xylulose-5-phosphate synthase of Serratia proteamaculans (strain 568).